The primary structure comprises 433 residues: Protein CLP1 homolog (433 aa).

Residues E22, R61, and 128-133 contribute to the ATP site; that span reads DVGKTT.

The protein belongs to the Clp1 family. Clp1 subfamily.

It is found in the nucleus. Its function is as follows. Required for endonucleolytic cleavage during polyadenylation-dependent pre-mRNA 3'-end formation. The protein is Protein CLP1 homolog of Brugia malayi (Filarial nematode worm).